The primary structure comprises 319 residues: 1-aminocyclopropane-1-carboxylate oxidase 1 (319 aa).

The 101-residue stretch at 153–253 (PNFGTKVSNY…RMSLASFYNP (101 aa)) folds into the Fe2OG dioxygenase domain. 3 residues coordinate Fe cation: histidine 177, aspartate 179, and histidine 234.

The protein belongs to the iron/ascorbate-dependent oxidoreductase family. Requires Fe cation as cofactor.

The catalysed reaction is 1-aminocyclopropane-1-carboxylate + L-ascorbate + O2 = ethene + L-dehydroascorbate + hydrogen cyanide + CO2 + 2 H2O. It participates in alkene biosynthesis; ethylene biosynthesis via S-adenosyl-L-methionine; ethylene from S-adenosyl-L-methionine: step 2/2. The chain is 1-aminocyclopropane-1-carboxylate oxidase 1 (ACO1) from Petunia hybrida (Petunia).